The primary structure comprises 311 residues: Heme A synthase (311 aa).

Residues 1–6 lie on the Cytoplasmic side of the membrane; that stretch reads MQRFIK. Residues 7–27 form a helical membrane-spanning segment; sequence WLAVITSLDLLIVLLGGALVT. Residues 28 to 62 lie on the Extracellular side of the membrane; that stretch reads KTGSGQGCGKSWPLCNGEFVPSNLSMETIIELSHR. The cysteines at positions 35 and 42 are disulfide-linked. The active site involves Glu58. Heme o is bound at residue His61. The helical transmembrane segment at 63–83 threads the bilayer; sequence LTSGSAGILVTLLCILSWKYY. Topologically, residues 84–91 are cytoplasmic; the sequence is KHVRETKT. Residues 92 to 112 form a helical membrane-spanning segment; the sequence is LAILSFVFLVAQALMGAAAVV. Over 113–121 the chain is Extracellular; it reads WGQMPAVLA. Residues 122 to 142 traverse the membrane as a helical segment; that stretch reads IHFGISLISFASVILLTCLIF. Position 123 (His123) interacts with heme o. Topologically, residues 143–159 are cytoplasmic; sequence EIDQKFDARSLIMDKKM. The chain crosses the membrane as a helical span at residues 160 to 180; it reads KFHIYGVTIYSYIVVYTGALV. Topologically, residues 181-211 are extracellular; the sequence is RHERASLACPDFPLCSKNRPMPTQLHEWVQM. Cys189 and Cys195 are oxidised to a cystine. A helical membrane pass occupies residues 212-232; sequence GHRVAAMLIFAWILYAMILAI. His213 provides a ligand contact to heme b. Residues 233 to 243 lie on the Cytoplasmic side of the membrane; it reads RHYKQQPVVYW. Residues 244-264 form a helical membrane-spanning segment; it reads GWIISFILVTLQAIVGILVVF. Residues 265–271 lie on the Extracellular side of the membrane; sequence TNASLSM. A helical membrane pass occupies residues 272 to 292; the sequence is ALLHSLFISCLFAVLCYLVML. His275 serves as a coordination point for heme b. Residues 293–311 lie on the Cytoplasmic side of the membrane; the sequence is GTRSKVNAKEAASISKQTK.

This sequence belongs to the COX15/CtaA family. Type 1 subfamily. As to quaternary structure, interacts with CtaB. Heme b is required as a cofactor.

The protein resides in the cell membrane. The enzyme catalyses Fe(II)-heme o + 2 A + H2O = Fe(II)-heme a + 2 AH2. The protein operates within porphyrin-containing compound metabolism; heme A biosynthesis; heme A from heme O: step 1/1. In terms of biological role, catalyzes the conversion of heme O to heme A by two successive hydroxylations of the methyl group at C8. The first hydroxylation forms heme I, the second hydroxylation results in an unstable dihydroxymethyl group, which spontaneously dehydrates, resulting in the formyl group of heme A. This Bacillus cereus (strain AH187) protein is Heme A synthase.